Here is a 172-residue protein sequence, read N- to C-terminus: Ribosome maturation factor RimM (172 aa).

A PRC barrel domain is found at 97–170 (ENEFYFHEII…KITIEVMEGL (74 aa)).

The protein belongs to the RimM family. In terms of assembly, binds ribosomal protein uS19.

The protein resides in the cytoplasm. Its function is as follows. An accessory protein needed during the final step in the assembly of 30S ribosomal subunit, possibly for assembly of the head region. Essential for efficient processing of 16S rRNA. May be needed both before and after RbfA during the maturation of 16S rRNA. It has affinity for free ribosomal 30S subunits but not for 70S ribosomes. This is Ribosome maturation factor RimM from Listeria innocua serovar 6a (strain ATCC BAA-680 / CLIP 11262).